Reading from the N-terminus, the 89-residue chain is Small ribosomal subunit protein uS15 (89 aa).

Belongs to the universal ribosomal protein uS15 family. In terms of assembly, part of the 30S ribosomal subunit. Forms a bridge to the 50S subunit in the 70S ribosome, contacting the 23S rRNA.

Its function is as follows. One of the primary rRNA binding proteins, it binds directly to 16S rRNA where it helps nucleate assembly of the platform of the 30S subunit by binding and bridging several RNA helices of the 16S rRNA. Forms an intersubunit bridge (bridge B4) with the 23S rRNA of the 50S subunit in the ribosome. This chain is Small ribosomal subunit protein uS15, found in Shewanella loihica (strain ATCC BAA-1088 / PV-4).